The chain runs to 450 residues: tRNA modification GTPase MnmE (450 aa).

Residues arginine 23, glutamate 80, and arginine 123 each contribute to the (6S)-5-formyl-5,6,7,8-tetrahydrofolate site. The 154-residue stretch at 219-372 (GLHVVLAGQP…LRARLLQMAG (154 aa)) folds into the TrmE-type G domain. Asparagine 229 contributes to the K(+) binding site. GTP-binding positions include 229–234 (NVGKSS), 248–254 (TPIAGTT), and 273–276 (DTAG). Serine 233 is a Mg(2+) binding site. K(+) is bound by residues threonine 248, isoleucine 250, and threonine 253. Threonine 254 serves as a coordination point for Mg(2+). Lysine 450 is a binding site for (6S)-5-formyl-5,6,7,8-tetrahydrofolate.

Belongs to the TRAFAC class TrmE-Era-EngA-EngB-Septin-like GTPase superfamily. TrmE GTPase family. In terms of assembly, homodimer. Heterotetramer of two MnmE and two MnmG subunits. K(+) is required as a cofactor.

It is found in the cytoplasm. In terms of biological role, exhibits a very high intrinsic GTPase hydrolysis rate. Involved in the addition of a carboxymethylaminomethyl (cmnm) group at the wobble position (U34) of certain tRNAs, forming tRNA-cmnm(5)s(2)U34. The chain is tRNA modification GTPase MnmE from Bordetella avium (strain 197N).